Reading from the N-terminus, the 342-residue chain is DNA-directed RNA polymerase subunit alpha (342 aa).

The interval 1 to 239 (MTTFLAKNWS…DQLQVFINFQ (239 aa)) is alpha N-terminal domain (alpha-NTD). The interval 254–342 (INPVLLKKVY…SLAKKHEDQY (89 aa)) is alpha C-terminal domain (alpha-CTD).

This sequence belongs to the RNA polymerase alpha chain family. In terms of assembly, homodimer. The RNAP catalytic core consists of 2 alpha, 1 beta, 1 beta' and 1 omega subunit. When a sigma factor is associated with the core the holoenzyme is formed, which can initiate transcription.

The catalysed reaction is RNA(n) + a ribonucleoside 5'-triphosphate = RNA(n+1) + diphosphate. In terms of biological role, DNA-dependent RNA polymerase catalyzes the transcription of DNA into RNA using the four ribonucleoside triphosphates as substrates. This chain is DNA-directed RNA polymerase subunit alpha, found in Orientia tsutsugamushi (strain Boryong) (Rickettsia tsutsugamushi).